Consider the following 211-residue polypeptide: Uracil phosphoribosyltransferase (211 aa).

5-phospho-alpha-D-ribose 1-diphosphate contacts are provided by residues Arg-78, Arg-103, and 130–138 (DPMLATGAT). Residues Ile-195 and 200 to 202 (GDA) each bind uracil. Asp-201 lines the 5-phospho-alpha-D-ribose 1-diphosphate pocket.

Belongs to the UPRTase family. It depends on Mg(2+) as a cofactor.

The catalysed reaction is UMP + diphosphate = 5-phospho-alpha-D-ribose 1-diphosphate + uracil. It functions in the pathway pyrimidine metabolism; UMP biosynthesis via salvage pathway; UMP from uracil: step 1/1. Its activity is regulated as follows. Allosterically activated by GTP. In terms of biological role, catalyzes the conversion of uracil and 5-phospho-alpha-D-ribose 1-diphosphate (PRPP) to UMP and diphosphate. The sequence is that of Uracil phosphoribosyltransferase from Renibacterium salmoninarum (strain ATCC 33209 / DSM 20767 / JCM 11484 / NBRC 15589 / NCIMB 2235).